The following is a 320-amino-acid chain: Replication factor C small subunit 2 (320 aa).

44–51 (GPPGTGKT) serves as a coordination point for ATP.

It belongs to the activator 1 small subunits family. RfcS subfamily. In terms of assembly, heteromultimer composed of small subunits (RfcS) and large subunits (RfcL).

Functionally, part of the RFC clamp loader complex which loads the PCNA sliding clamp onto DNA. The chain is Replication factor C small subunit 2 from Pyrobaculum islandicum (strain DSM 4184 / JCM 9189 / GEO3).